The sequence spans 166 residues: Ribosome biogenesis regulatory protein homolog (166 aa).

Residues serine 34 and serine 64 each carry the phosphoserine modification. Residues 144–166 (KEKKLTSKQVRNTSKKIKRSRRH) form a disordered region. Residues 156–166 (TSKKIKRSRRH) show a composition bias toward basic residues.

This sequence belongs to the RRS1 family. As to quaternary structure, component of a hexameric 5S RNP precursor complex, composed of 5S RNA, rrs1, rpf2, rpl5a/rpl5b, rpl11a/rpl11b and syo1; this complex acts as a precursor for ribosome assembly. Interacts with sad1.

It is found in the nucleus. The protein localises to the nucleolus. Its function is as follows. Involved in ribosomal large subunit assembly. This chain is Ribosome biogenesis regulatory protein homolog, found in Schizosaccharomyces pombe (strain 972 / ATCC 24843) (Fission yeast).